Reading from the N-terminus, the 357-residue chain is Protein RecA (357 aa).

Gly69–Thr76 contributes to the ATP binding site. The interval Ser337 to Glu357 is disordered. The span at Glu346–Glu357 shows a compositional bias: acidic residues.

It belongs to the RecA family.

The protein localises to the cytoplasm. In terms of biological role, can catalyze the hydrolysis of ATP in the presence of single-stranded DNA, the ATP-dependent uptake of single-stranded DNA by duplex DNA, and the ATP-dependent hybridization of homologous single-stranded DNAs. It interacts with LexA causing its activation and leading to its autocatalytic cleavage. The sequence is that of Protein RecA from Nostoc sp. (strain PCC 7120 / SAG 25.82 / UTEX 2576).